A 411-amino-acid polypeptide reads, in one-letter code: Probable protein S-acyltransferase 2 (411 aa).

2 helical membrane-spanning segments follow: residues 56-76 and 85-105; these read LTTA…VFLI and SLIL…LFLT. The DHHC domain maps to 160–210; the sequence is KFCDTCLLYRPPRASHCSICNNCVQRFDHHCPWVGQCIALRNYPYFICFIS. Residue Cys190 is the S-palmitoyl cysteine intermediate of the active site. Transmembrane regions (helical) follow at residues 205 to 225 and 245 to 265; these read FICF…FSWV and FVVL…LTVF. Position 405 is a phosphoserine (Ser405).

This sequence belongs to the DHHC palmitoyltransferase family. Expressed in flowers and pollen.

Its subcellular location is the cytoplasmic vesicle membrane. It catalyses the reaction L-cysteinyl-[protein] + hexadecanoyl-CoA = S-hexadecanoyl-L-cysteinyl-[protein] + CoA. In terms of biological role, palmitoyl acyltransferase. This is Probable protein S-acyltransferase 2 (PAT02) from Arabidopsis thaliana (Mouse-ear cress).